Here is a 193-residue protein sequence, read N- to C-terminus: Xanthine phosphoribosyltransferase (193 aa).

Residues L20 and N27 each contribute to the xanthine site. 129–133 provides a ligand contact to 5-phospho-alpha-D-ribose 1-diphosphate; it reads ANGKA. Position 157 (K157) interacts with xanthine.

The protein belongs to the purine/pyrimidine phosphoribosyltransferase family. Xpt subfamily. As to quaternary structure, homodimer.

It localises to the cytoplasm. It carries out the reaction XMP + diphosphate = xanthine + 5-phospho-alpha-D-ribose 1-diphosphate. Its pathway is purine metabolism; XMP biosynthesis via salvage pathway; XMP from xanthine: step 1/1. In terms of biological role, converts the preformed base xanthine, a product of nucleic acid breakdown, to xanthosine 5'-monophosphate (XMP), so it can be reused for RNA or DNA synthesis. The protein is Xanthine phosphoribosyltransferase of Bifidobacterium longum subsp. infantis (strain ATCC 15697 / DSM 20088 / JCM 1222 / NCTC 11817 / S12).